Here is a 136-residue protein sequence, read N- to C-terminus: Lymphocyte antigen 6E (136 aa).

The first 26 residues, 1 to 26, serve as a signal peptide directing secretion; it reads MSATSNMRVFLPVLLAALLGMEQVHS. The UPAR/Ly6 domain maps to 27–118; that stretch reads LMCFSCTDQK…AGLGLRASIP (92 aa). Cystine bridges form between cysteine 29/cysteine 54, cysteine 32/cysteine 41, cysteine 47/cysteine 76, cysteine 80/cysteine 98, and cysteine 99/cysteine 104. N-linked (GlcNAc...) asparagine glycosylation occurs at asparagine 105. The GPI-anchor amidated alanine moiety is linked to residue alanine 108. A propeptide spans 109–136 (removed in mature form); it reads AGLGLRASIPLLGLGLLLSLLALLQLSP.

In terms of assembly, interacts with CHRNA4. Interacts with CD3Z/CD247. In terms of tissue distribution, ubiquitously expressed in mouse adult tissues with maximal expression in the lung and the salivary gland. Expression is strikingly lower in the fetal tissues except for the placenta. Present in thymus where its expression is observed in immature thymocytes and thymic stromal cells. Also found on functionally active T-cells as well as B-cells and thymic dendritic cells.

The protein resides in the cell membrane. GPI-anchored cell surface protein that regulates T-lymphocytes proliferation, differentiation, and activation. Regulates the T-cell receptor (TCR) signaling by interacting with component CD3Z/CD247 at the plasma membrane, leading to CD3Z/CD247 phosphorylation modulation. Restricts the entry of murine coronavirus, mouse hepatitis virus, by interfering with spike protein-mediated membrane fusion. Also plays an essential role in placenta formation by acting as the main receptor for syncytin-A (SynA). Therefore, participates in the normal fusion of syncytiotrophoblast layer I (SynT-I) and in the proper morphogenesis of both fetal and maternal vasculatures within the placenta. May also act as a modulator of nicotinic acetylcholine receptors (nAChRs) activity. In vitro inhibits alpha-3:beta-4-containing nAChRs maximum response. This Mus musculus (Mouse) protein is Lymphocyte antigen 6E.